Consider the following 263-residue polypeptide: 3'-5' ssDNA/RNA exonuclease TatD (263 aa).

Positions 92, 128, and 153 each coordinate a divalent metal cation.

The protein belongs to the metallo-dependent hydrolases superfamily. TatD-type hydrolase family. TatD subfamily. Monomer. The cofactor is Mg(2+).

It is found in the cytoplasm. Its function is as follows. 3'-5' exonuclease that prefers single-stranded DNA and RNA. May play a role in the H(2)O(2)-induced DNA damage repair. The protein is 3'-5' ssDNA/RNA exonuclease TatD of Rahnella sp. (strain Y9602).